A 218-amino-acid polypeptide reads, in one-letter code: Serine/threonine-protein phosphatase 2 (218 aa).

Asp-22, His-24, Asp-51, and Asn-77 together coordinate Mn(2+). The active-site Proton donor is His-78. His-187 serves as a coordination point for Mn(2+).

It belongs to the PPP phosphatase family. It depends on Mn(2+) as a cofactor.

It carries out the reaction O-phospho-L-seryl-[protein] + H2O = L-seryl-[protein] + phosphate. The enzyme catalyses O-phospho-L-threonyl-[protein] + H2O = L-threonyl-[protein] + phosphate. In terms of biological role, has been shown, in vitro, to act on Ser, Thr and Tyr-phosphorylated substrates. In Escherichia coli (strain K12), this protein is Serine/threonine-protein phosphatase 2 (pphB).